The chain runs to 109 residues: uncharacterized protein (109 aa).

A signal peptide spans 1 to 28 (MNMLAYFLYCRQLLLAVVLIEFPPRLCG).

This is an uncharacterized protein from Homo sapiens (Human).